Here is a 489-residue protein sequence, read N- to C-terminus: Protein SOF1 (489 aa).

WD repeat units lie at residues 65 to 105 (GHRD…EFVS), 113 to 158 (VTGL…YSNK), 177 to 214 (DGES…PVSD), 217 to 257 (WGAD…PTQK), 259 to 299 (VQTM…RSLN), 303 to 342 (DHVS…SREI), and 346 to 385 (KRMQ…RSNV). 2 stretches are compositionally biased toward basic and acidic residues: residues 440–459 (REAN…ERKK) and 466–489 (HKYE…TQEK). The interval 440-489 (REANERRTRKDMPYISERKKQIVGTVHKYEDSGRDRKRRKEDDKRDTQEK) is disordered.

It belongs to the WD repeat DCAF13/WDSOF1 family. Interacts with snoRNA U3. Interacts with NOP1 and MPP10. Component of the ribosomal small subunit (SSU) processome composed of at least 40 protein subunits and snoRNA U3.

It localises to the nucleus. The protein localises to the nucleolus. Its function is as follows. Required for ribosomal RNA processing. The chain is Protein SOF1 (SOF1) from Saccharomyces cerevisiae (strain ATCC 204508 / S288c) (Baker's yeast).